The primary structure comprises 217 residues: ATP phosphoribosyltransferase (217 aa).

Belongs to the ATP phosphoribosyltransferase family. Short subfamily. Heteromultimer composed of HisG and HisZ subunits.

It localises to the cytoplasm. It catalyses the reaction 1-(5-phospho-beta-D-ribosyl)-ATP + diphosphate = 5-phospho-alpha-D-ribose 1-diphosphate + ATP. Its pathway is amino-acid biosynthesis; L-histidine biosynthesis; L-histidine from 5-phospho-alpha-D-ribose 1-diphosphate: step 1/9. Its function is as follows. Catalyzes the condensation of ATP and 5-phosphoribose 1-diphosphate to form N'-(5'-phosphoribosyl)-ATP (PR-ATP). Has a crucial role in the pathway because the rate of histidine biosynthesis seems to be controlled primarily by regulation of HisG enzymatic activity. In Polaromonas naphthalenivorans (strain CJ2), this protein is ATP phosphoribosyltransferase.